Consider the following 234-residue polypeptide: Large ribosomal subunit protein uL1 (234 aa).

Belongs to the universal ribosomal protein uL1 family. Part of the 50S ribosomal subunit.

Functionally, binds directly to 23S rRNA. The L1 stalk is quite mobile in the ribosome, and is involved in E site tRNA release. In terms of biological role, protein L1 is also a translational repressor protein, it controls the translation of the L11 operon by binding to its mRNA. This is Large ribosomal subunit protein uL1 from Vibrio atlanticus (strain LGP32) (Vibrio splendidus (strain Mel32)).